Here is a 214-residue protein sequence, read N- to C-terminus: MRIMLLGAPGAGKGTQAQFIMEKYGIPQISTGDMLRAAVKAGTPLGLEAKKVMDAGQLVSDELIIGLVKERVAQDDCAKGFLLDGFPRTIPQADAMAAGGIAIDHVVEIDVPDEEIVKRMGGRRVHPGSGRVYHIVFNQPKVEGKDDVTGEDLAIRPDDEEATVRKRLDIYHEQTKPLVEYYGAVAAKGEATYNKFDGTQSVAKVSEEIVAALS.

Residue 10-15 (GAGKGT) participates in ATP binding. The NMP stretch occupies residues 30 to 59 (STGDMLRAAVKAGTPLGLEAKKVMDAGQLV). AMP is bound by residues threonine 31, arginine 36, 57 to 59 (QLV), 85 to 88 (GFPR), and glutamine 92. The interval 122-159 (GRRVHPGSGRVYHIVFNQPKVEGKDDVTGEDLAIRPDD) is LID. Residues arginine 123 and 132 to 133 (VY) contribute to the ATP site. Positions 156 and 167 each coordinate AMP. Glutamine 200 lines the ATP pocket.

It belongs to the adenylate kinase family. In terms of assembly, monomer.

The protein resides in the cytoplasm. The enzyme catalyses AMP + ATP = 2 ADP. It participates in purine metabolism; AMP biosynthesis via salvage pathway; AMP from ADP: step 1/1. In terms of biological role, catalyzes the reversible transfer of the terminal phosphate group between ATP and AMP. Plays an important role in cellular energy homeostasis and in adenine nucleotide metabolism. The sequence is that of Adenylate kinase from Shewanella piezotolerans (strain WP3 / JCM 13877).